A 206-amino-acid polypeptide reads, in one-letter code: Small ribosomal subunit protein uS2 (206 aa).

It belongs to the universal ribosomal protein uS2 family.

In Methanothrix thermoacetophila (strain DSM 6194 / JCM 14653 / NBRC 101360 / PT) (Methanosaeta thermophila), this protein is Small ribosomal subunit protein uS2.